The primary structure comprises 913 residues: Pentatricopeptide repeat-containing protein At1g10270 (913 aa).

A disordered region spans residues S34–T138. Positions D64–N73 are enriched in polar residues. Over residues H74–P84 the composition is skewed to pro residues. A Nuclear localization signal motif is present at residues E99 to R108. The segment covering R108–N130 has biased composition (basic and acidic residues). The interval L134–L167 is leucine-zipper. PPR repeat units lie at residues T179–P214, N215–P250, S251–A285, D286–K316, D321–M355, H356–P390, N396–K426, D435–A469, D470–V504, V505–P539, and D540–V574. A disordered region spans residues R607–N913. Polar residues predominate over residues W639–S649. Low complexity-rich tracts occupy residues G650–A666 and S673–T690. A 14 X 11 AA approximate tandem repeats of W-x(2)-Q-x(4)-Q-x(2) region spans residues W674–T858. The segment covering A691 to R700 has biased composition (polar residues). A compositionally biased stretch (low complexity) spans Q706 to W727. A compositionally biased stretch (polar residues) spans T728–A761. Low complexity predominate over residues N762–Q791. A compositionally biased stretch (polar residues) spans P792–P814. Residues W815–Q845 show a composition bias toward low complexity. Polar residues-rich tracts occupy residues S846–L867 and A875–P894. Residues E899–N913 show a composition bias toward basic and acidic residues.

It belongs to the PPR family. P subfamily. In terms of assembly, interacts with RPB36B through its WQQ domain. As to expression, ubiquitous but preferentially expressed in gametophytes and young embryos.

Its subcellular location is the nucleus. Functionally, may function as a transcriptional regulator essential for early embryogenesis. The polypeptide is Pentatricopeptide repeat-containing protein At1g10270 (GRP23) (Arabidopsis thaliana (Mouse-ear cress)).